Reading from the N-terminus, the 357-residue chain is Glycerol-3-phosphate dehydrogenase [NAD(P)+] (357 aa).

Positions 30, 31, 51, and 124 each coordinate NADPH. Positions 124 and 152 each coordinate sn-glycerol 3-phosphate. Residue Ala-156 coordinates NADPH. Residues Lys-207, Asp-260, Ser-270, Arg-271, and Asn-272 each contribute to the sn-glycerol 3-phosphate site. Lys-207 serves as the catalytic Proton acceptor. NADPH is bound at residue Arg-271. Glu-297 serves as a coordination point for NADPH.

Belongs to the NAD-dependent glycerol-3-phosphate dehydrogenase family.

The protein localises to the cytoplasm. It carries out the reaction sn-glycerol 3-phosphate + NAD(+) = dihydroxyacetone phosphate + NADH + H(+). The enzyme catalyses sn-glycerol 3-phosphate + NADP(+) = dihydroxyacetone phosphate + NADPH + H(+). The protein operates within membrane lipid metabolism; glycerophospholipid metabolism. Functionally, catalyzes the reduction of the glycolytic intermediate dihydroxyacetone phosphate (DHAP) to sn-glycerol 3-phosphate (G3P), the key precursor for phospholipid synthesis. This Acinetobacter baylyi (strain ATCC 33305 / BD413 / ADP1) protein is Glycerol-3-phosphate dehydrogenase [NAD(P)+].